A 553-amino-acid polypeptide reads, in one-letter code: Arginine--tRNA ligase (553 aa).

The short motif at 122–132 (ANPTGFLHVGH) is the 'HIGH' region element.

This sequence belongs to the class-I aminoacyl-tRNA synthetase family. As to quaternary structure, monomer.

The protein localises to the cytoplasm. The catalysed reaction is tRNA(Arg) + L-arginine + ATP = L-arginyl-tRNA(Arg) + AMP + diphosphate. The sequence is that of Arginine--tRNA ligase from Mesoplasma florum (strain ATCC 33453 / NBRC 100688 / NCTC 11704 / L1) (Acholeplasma florum).